Reading from the N-terminus, the 250-residue chain is Probable transcriptional regulatory protein Cag_0165 (250 aa).

This sequence belongs to the TACO1 family.

Its subcellular location is the cytoplasm. The protein is Probable transcriptional regulatory protein Cag_0165 of Chlorobium chlorochromatii (strain CaD3).